The primary structure comprises 120 residues: Large ribosomal subunit protein uL29A (120 aa).

A phosphoserine mark is found at Ser13 and Ser50.

It belongs to the universal ribosomal protein uL29 family. As to quaternary structure, component of the large ribosomal subunit (LSU). Mature yeast ribosomes consist of a small (40S) and a large (60S) subunit. The 40S small subunit contains 1 molecule of ribosomal RNA (18S rRNA) and 33 different proteins (encoded by 57 genes). The large 60S subunit contains 3 rRNA molecules (25S, 5.8S and 5S rRNA) and 46 different proteins (encoded by 81 genes). uL29 is associated with the polypeptide exit tunnel.

Its subcellular location is the cytoplasm. Its function is as follows. Component of the ribosome, a large ribonucleoprotein complex responsible for the synthesis of proteins in the cell. The small ribosomal subunit (SSU) binds messenger RNAs (mRNAs) and translates the encoded message by selecting cognate aminoacyl-transfer RNA (tRNA) molecules. The large subunit (LSU) contains the ribosomal catalytic site termed the peptidyl transferase center (PTC), which catalyzes the formation of peptide bonds, thereby polymerizing the amino acids delivered by tRNAs into a polypeptide chain. The nascent polypeptides leave the ribosome through a tunnel in the LSU and interact with protein factors that function in enzymatic processing, targeting, and the membrane insertion of nascent chains at the exit of the ribosomal tunnel. This Saccharomyces cerevisiae (strain ATCC 204508 / S288c) (Baker's yeast) protein is Large ribosomal subunit protein uL29A.